The primary structure comprises 78 residues: DNA-directed RNA polymerase subunit omega (78 aa).

It belongs to the RNA polymerase subunit omega family. As to quaternary structure, in cyanobacteria the RNAP catalytic core is composed of 2 alpha, 1 beta, 1 beta', 1 gamma and 1 omega subunit. When a sigma factor is associated with the core the holoenzyme is formed, which can initiate transcription.

The enzyme catalyses RNA(n) + a ribonucleoside 5'-triphosphate = RNA(n+1) + diphosphate. Promotes RNA polymerase assembly. Latches the N- and C-terminal regions of the beta' subunit thereby facilitating its interaction with the beta and alpha subunits. The sequence is that of DNA-directed RNA polymerase subunit omega from Trichormus variabilis (strain ATCC 29413 / PCC 7937) (Anabaena variabilis).